A 241-amino-acid polypeptide reads, in one-letter code: LexA repressor (241 aa).

Positions 41 to 61 form a DNA-binding region, H-T-H motif; it reads FREIGNAAGLKSPSSVKHQLQ. Residues serine 165 and lysine 202 each act as for autocatalytic cleavage activity in the active site.

This sequence belongs to the peptidase S24 family. In terms of assembly, homodimer.

The catalysed reaction is Hydrolysis of Ala-|-Gly bond in repressor LexA.. Functionally, represses a number of genes involved in the response to DNA damage (SOS response), including recA and lexA. In the presence of single-stranded DNA, RecA interacts with LexA causing an autocatalytic cleavage which disrupts the DNA-binding part of LexA, leading to derepression of the SOS regulon and eventually DNA repair. This Bifidobacterium longum (strain DJO10A) protein is LexA repressor.